Consider the following 649-residue polypeptide: Putative calpain-like cysteine protease A (649 aa).

A propeptide spanning residues 1–3 is cleaved from the precursor; sequence MLT. Disordered regions lie at residues 1–22 and 124–193; these read MLTT…SSPS and PLSN…SMPA. The region spanning 15–123 is the C2 domain; that stretch reads TTTTSSPSSD…LHANGEAKWY (109 aa). The span at 140–149 shows a compositional bias: low complexity; the sequence is ITNSNNKDNN. Residues 159-172 are compositionally biased toward basic and acidic residues; it reads AQEKGDEDQHHSAD. Domain III stretches follow at residues 458–489 and 498–633; these read EGTY…NATF and EVEQ…ISLD.

The protein belongs to the peptidase C2 family. Monomer. Undergoes autolytic cleavage between Pro-192 and Ala-193.

Its subcellular location is the cytoplasm. It localises to the cytosol. Has a weak caseinolytic activity. In Dictyostelium discoideum (Social amoeba), this protein is Putative calpain-like cysteine protease A (cplA).